The chain runs to 342 residues: Nuclear hormone receptor family member nhr-150 (342 aa).

The nuclear receptor DNA-binding region spans 1–71 (MCQVCGAAEA…AGMTSKKIQS (71 aa)). The NR C4-type zinc-finger motif lies at 2 to 22 (CQVCGAAEADLHFGGISCRAC). Residues 39 to 54 (CTCKTRILDSHPCRSC) form an NR C4-type; degenerate zinc finger. Residues 94–341 (SARIIPRSSL…GFMEIIRESK (248 aa)) form the NR LBD domain.

Belongs to the nuclear hormone receptor family.

It is found in the nucleus. Orphan nuclear receptor. This Caenorhabditis elegans protein is Nuclear hormone receptor family member nhr-150 (nhr-150).